Reading from the N-terminus, the 205-residue chain is Red chlorophyll catabolite reductase (205 aa).

Substrate is bound by residues glutamate 39 and aspartate 175.

In terms of assembly, homodimer. In terms of processing, the N-terminus is blocked. In terms of tissue distribution, in etiolated and green primary leaves. Low amount in roots.

Its subcellular location is the plastid. The protein resides in the chloroplast stroma. It carries out the reaction primary fluorescent chlorophyll catabolite + 2 oxidized [2Fe-2S]-[ferredoxin] = red chlorophyll catabolite + 2 reduced [2Fe-2S]-[ferredoxin] + 3 H(+). The protein operates within porphyrin-containing compound metabolism; chlorophyll degradation. Functionally, catalyzes the key reaction of chlorophyll catabolism, porphyrin macrocycle cleavage of pheophorbide a (pheide a) to a primary fluorescent catabolite (pFCC). Works in a two-step reaction with pheophorbide a oxygenase (PaO) by reducing the C20/C1 double bond of the intermediate, RCC. This chain is Red chlorophyll catabolite reductase (rccR), found in Hordeum vulgare (Barley).